Here is a 173-residue protein sequence, read N- to C-terminus: Lithostathine-2 (173 aa).

Positions 1 to 22 (MAQNNVYLILFLCLMFLSYSQG) are cleaved as a signal peptide. Residues 41-171 (INCPEGANAY…EAQYSFVCKF (131 aa)) enclose the C-type lectin domain. 3 disulfides stabilise this stretch: C43/C54, C71/C169, and C144/C161.

As to expression, expressed only in regenerating islets and normal exocrine pancreas, but not in normal pancreatic islets. Expressed strongly in pancreas, weakly in liver, but not at all in gall bladder.

Its subcellular location is the secreted. Its function is as follows. Might act as an inhibitor of spontaneous calcium carbonate precipitation. The sequence is that of Lithostathine-2 (Reg2) from Mus musculus (Mouse).